An 86-amino-acid chain; its full sequence is Beta-toxin CsEI (86 aa).

An N-terminal signal peptide occupies residues 1–19 (MNSLLMITACLVLIGTVWA). The LCN-type CS-alpha/beta domain occupies 20–84 (KDGYLVEKTG…TWPLPNKTCG (65 aa)). Cystine bridges form between Cys-30/Cys-83, Cys-34/Cys-59, Cys-43/Cys-64, and Cys-47/Cys-66. Cys-83 carries the cysteine amide modification.

It belongs to the long (4 C-C) scorpion toxin superfamily. Sodium channel inhibitor family. Beta subfamily. As to expression, expressed by the venom gland.

It localises to the secreted. Its function is as follows. Beta toxins bind voltage-independently at site-4 of sodium channels (Nav) and shift the voltage of activation toward more negative potentials thereby affecting sodium channel activation and promoting spontaneous and repetitive firing. Affects channels from chicken and frog. This Centruroides sculpturatus (Arizona bark scorpion) protein is Beta-toxin CsEI.